Consider the following 294-residue polypeptide: tRNA-uridine aminocarboxypropyltransferase 1 (294 aa).

The disordered stretch occupies residues 158–185; sequence DMQNDSSCEPSLKRPKCSQQYDKSKNEG. Residues 202–205 carry the DXTW motif; it reads DSTW.

The protein belongs to the TDD superfamily. DTWD1 family.

The protein localises to the nucleus. It catalyses the reaction a uridine in tRNA + S-adenosyl-L-methionine = a 3-[(3S)-3-amino-3-carboxypropyl]uridine in tRNA + S-methyl-5'-thioadenosine + H(+). Its function is as follows. Catalyzes the formation of 3-(3-amino-3-carboxypropyl)uridine (acp3U) at position 20 in the D-loop of several cytoplasmic tRNAs (acp3U(20)). This is tRNA-uridine aminocarboxypropyltransferase 1 from Xenopus tropicalis (Western clawed frog).